Reading from the N-terminus, the 338-residue chain is MIVAEEHKIAPWKIEEVNNLKKLLKEGQVIALVDMMEVPAVQLQEIRDNIRDLMTLRMSRNTLIKRAIEELAEESNDPKFAKLAECLERGAAIVITDMNPFKLYKTLEDGKAPAPIKAGAIAPSDIVVEAGSTGMPPGPFLGELKGAGLPAVIDKGKIAIKDDTVIVKEGEVVSPKVAVVLSALGIKPTKVGLDLLAAYEDGIVYTSDVLKIDEEEFVQNIQSAFTSAFNLSVNAAIPTTETIETILQKAFTEAKAVSIESAFITDKTVDDILGKAYAQMLSVASEAGEEALDDDLKERVSSTASAVEAKEEEAPKEEKEEEKEEEEEAPAAGLGMLF.

A disordered region spans residues 292-338 (LDDDLKERVSSTASAVEAKEEEAPKEEKEEEKEEEEEAPAAGLGMLF). The span at 308 to 318 (EAKEEEAPKEE) shows a compositional bias: basic and acidic residues. Residues 319–329 (KEEEKEEEEEA) show a composition bias toward acidic residues.

This sequence belongs to the universal ribosomal protein uL10 family. As to quaternary structure, part of the 50S ribosomal subunit. Forms part of the ribosomal stalk which helps the ribosome interact with GTP-bound translation factors. Forms a heptameric L10(L12)2(L12)2(L12)2 complex, where L10 forms an elongated spine to which the L12 dimers bind in a sequential fashion.

Functionally, forms part of the ribosomal stalk, playing a central role in the interaction of the ribosome with GTP-bound translation factors. The sequence is that of Large ribosomal subunit protein uL10 from Methanococcus aeolicus (strain ATCC BAA-1280 / DSM 17508 / OCM 812 / Nankai-3).